Reading from the N-terminus, the 129-residue chain is Small ribosomal subunit protein uS11 (129 aa).

Belongs to the universal ribosomal protein uS11 family. Part of the 30S ribosomal subunit. Interacts with proteins S7 and S18. Binds to IF-3.

Located on the platform of the 30S subunit, it bridges several disparate RNA helices of the 16S rRNA. Forms part of the Shine-Dalgarno cleft in the 70S ribosome. This chain is Small ribosomal subunit protein uS11, found in Bartonella tribocorum (strain CIP 105476 / IBS 506).